The following is a 37-amino-acid chain: Large ribosomal subunit protein bL36c (37 aa).

This sequence belongs to the bacterial ribosomal protein bL36 family.

The protein resides in the plastid. It localises to the chloroplast. The chain is Large ribosomal subunit protein bL36c from Oltmannsiellopsis viridis (Marine flagellate).